Consider the following 224-residue polypeptide: UPF0111 protein CT_691 (224 aa).

It belongs to the UPF0111 family.

The sequence is that of UPF0111 protein CT_691 from Chlamydia trachomatis serovar D (strain ATCC VR-885 / DSM 19411 / UW-3/Cx).